Consider the following 146-residue polypeptide: Large ribosomal subunit protein uL15 (146 aa).

The tract at residues 1-46 (MAIELHDLKPAPGAHKAKTRVGRGEGSKGKTAGRGTKGTGARKNVP) is disordered. Over residues 29–43 (GKTAGRGTKGTGARK) the composition is skewed to low complexity.

This sequence belongs to the universal ribosomal protein uL15 family. Part of the 50S ribosomal subunit.

Functionally, binds to the 23S rRNA. The polypeptide is Large ribosomal subunit protein uL15 (Cutibacterium acnes (strain DSM 16379 / KPA171202) (Propionibacterium acnes)).